The chain runs to 368 residues: Aspartate-semialdehyde dehydrogenase (368 aa).

NADP(+) is bound by residues 10-13 (RGMV), 37-38 (TS), and Q74. Position 103 (R103) interacts with phosphate. Residue C136 is the Acyl-thioester intermediate of the active site. C136 is subject to S-cysteinyl cysteine; in inhibited form. Residue Q163 participates in substrate binding. Residues 166 to 167 (SG) and P194 contribute to the NADP(+) site. E242 is a binding site for substrate. K245 contacts phosphate. R268 lines the substrate pocket. Residue H275 is the Proton acceptor of the active site. Q351 serves as a coordination point for NADP(+).

It belongs to the aspartate-semialdehyde dehydrogenase family. In terms of assembly, homodimer.

It carries out the reaction L-aspartate 4-semialdehyde + phosphate + NADP(+) = 4-phospho-L-aspartate + NADPH + H(+). It functions in the pathway amino-acid biosynthesis; L-lysine biosynthesis via DAP pathway; (S)-tetrahydrodipicolinate from L-aspartate: step 2/4. It participates in amino-acid biosynthesis; L-methionine biosynthesis via de novo pathway; L-homoserine from L-aspartate: step 2/3. The protein operates within amino-acid biosynthesis; L-threonine biosynthesis; L-threonine from L-aspartate: step 2/5. In terms of biological role, catalyzes the NADPH-dependent formation of L-aspartate-semialdehyde (L-ASA) by the reductive dephosphorylation of L-aspartyl-4-phosphate. The sequence is that of Aspartate-semialdehyde dehydrogenase from Salmonella typhi.